The following is a 308-amino-acid chain: Aspartate carbamoyltransferase catalytic subunit (308 aa).

The carbamoyl phosphate site is built by arginine 55 and threonine 56. Residue lysine 83 coordinates L-aspartate. The carbamoyl phosphate site is built by arginine 105, histidine 133, and glutamine 136. The L-aspartate site is built by arginine 166 and arginine 223. The carbamoyl phosphate site is built by glycine 264 and proline 265.

Belongs to the aspartate/ornithine carbamoyltransferase superfamily. ATCase family. As to quaternary structure, heterododecamer (2C3:3R2) of six catalytic PyrB chains organized as two trimers (C3), and six regulatory PyrI chains organized as three dimers (R2).

It catalyses the reaction carbamoyl phosphate + L-aspartate = N-carbamoyl-L-aspartate + phosphate + H(+). It functions in the pathway pyrimidine metabolism; UMP biosynthesis via de novo pathway; (S)-dihydroorotate from bicarbonate: step 2/3. In terms of biological role, catalyzes the condensation of carbamoyl phosphate and aspartate to form carbamoyl aspartate and inorganic phosphate, the committed step in the de novo pyrimidine nucleotide biosynthesis pathway. This chain is Aspartate carbamoyltransferase catalytic subunit, found in Salinispora tropica (strain ATCC BAA-916 / DSM 44818 / JCM 13857 / NBRC 105044 / CNB-440).